Here is a 607-residue protein sequence, read N- to C-terminus: Glutamine--fructose-6-phosphate aminotransferase [isomerizing] (607 aa).

Cysteine 2 acts as the Nucleophile; for GATase activity in catalysis. One can recognise a Glutamine amidotransferase type-2 domain in the interval 2–217; the sequence is CGIIGIIGRE…EGDWVVLTRE (216 aa). SIS domains follow at residues 283–422 and 455–597; these read PDFD…VKGQ and VATA…VDQP. Lysine 602 acts as the For Fru-6P isomerization activity in catalysis.

In terms of assembly, homodimer.

The protein localises to the cytoplasm. It carries out the reaction D-fructose 6-phosphate + L-glutamine = D-glucosamine 6-phosphate + L-glutamate. Its function is as follows. Catalyzes the first step in hexosamine metabolism, converting fructose-6P into glucosamine-6P using glutamine as a nitrogen source. The protein is Glutamine--fructose-6-phosphate aminotransferase [isomerizing] of Zymomonas mobilis subsp. mobilis (strain ATCC 31821 / ZM4 / CP4).